A 204-amino-acid polypeptide reads, in one-letter code: MECNLVNLSNDNVGAAQLNPLIFSAKQKLSILHDIVRWQLAKRRAGTHKTKGISDVSGTTAKPYGQKRTGRARQGSLRSPQFRGGGIIFGPVVRSHTYSLNKKVRKFGLKIALSLKYLNNQVIILDNLNIDVKKTSEMCKCIKNFKFSSFLIVGDYGDDLLRAAKNLHYVDLIKPIGLNVFDILNHECVMLTKDTLKHLEGRLL.

The disordered stretch occupies residues 49 to 76 (KTKGISDVSGTTAKPYGQKRTGRARQGS).

The protein belongs to the universal ribosomal protein uL4 family. Part of the 50S ribosomal subunit.

Its function is as follows. One of the primary rRNA binding proteins, this protein initially binds near the 5'-end of the 23S rRNA. It is important during the early stages of 50S assembly. It makes multiple contacts with different domains of the 23S rRNA in the assembled 50S subunit and ribosome. In terms of biological role, forms part of the polypeptide exit tunnel. This chain is Large ribosomal subunit protein uL4, found in Wolbachia pipientis wMel.